The sequence spans 494 residues: uncharacterized protein (494 aa).

2 consecutive VOC domains span residues 18–174 (FIDC…FINR) and 229–408 (SLDH…FGIL). 3 residues coordinate Fe cation: His-232, His-349, and Glu-460.

This sequence belongs to the 4HPPD family. Requires Fe cation as cofactor.

Its function is as follows. May have dioxygenase activity. This is an uncharacterized protein from Dictyostelium discoideum (Social amoeba).